The chain runs to 734 residues: Tripartite terminase subunit 3 (734 aa).

The Nuclear localization signal signature appears at 184–190 (ASKRARV). The short motif at 259–266 (VPRRHGKT) is the Walker A motif element. A Walker B motif motif is present at residues 353–358 (LLFVDE). Glu-358 (for ATPase activity) is an active-site residue. Residues Asp-511, Glu-583, and Asp-707 each act as for nuclease activity in the active site.

This sequence belongs to the herpesviridae TRM3 protein family. Interacts with the terminase subunits TRM1 and TRM2. Interacts with portal protein.

The protein resides in the host nucleus. Its function is as follows. Component of the molecular motor that translocates viral genomic DNA in empty capsid during DNA packaging. Forms a tripartite terminase complex together with TRM1 and TRM2 in the host cytoplasm. Once the complex reaches the host nucleus, it interacts with the capsid portal vertex. This portal forms a ring in which genomic DNA is translocated into the capsid. TRM3 carries an RNase H-like nuclease activity that plays an important role for the cleavage of concatemeric viral DNA into unit length genomes. The polypeptide is Tripartite terminase subunit 3 (Equus caballus (Horse)).